Reading from the N-terminus, the 456-residue chain is Tyrosinase-like protein (456 aa).

Residues 1 to 22 (MNTMTLLGKVFLLQFLIGVGFC) form the signal peptide. Cu cation-binding residues include histidine 145, histidine 154, histidine 163, histidine 295, histidine 299, and histidine 322.

It belongs to the tyrosinase family. Cu(2+) is required as a cofactor. Prismatic layer of shell (at protein level).

Its subcellular location is the secreted. The protein is Tyrosinase-like protein of Pinctada maxima (Silver-lipped pearl oyster).